The primary structure comprises 606 residues: Aspartate--tRNA(Asp/Asn) ligase (606 aa).

Position 177 (glutamate 177) interacts with L-aspartate. The tract at residues 201–204 is aspartate; sequence QIFK. Position 223 (arginine 223) interacts with L-aspartate. Residues 223-225 and glutamine 232 contribute to the ATP site; that span reads RDE. Residue histidine 461 coordinates L-aspartate. Glutamate 499 lines the ATP pocket. Arginine 506 lines the L-aspartate pocket. 551 to 554 serves as a coordination point for ATP; sequence GLDR.

This sequence belongs to the class-II aminoacyl-tRNA synthetase family. Type 1 subfamily. As to quaternary structure, homodimer.

It is found in the cytoplasm. It carries out the reaction tRNA(Asx) + L-aspartate + ATP = L-aspartyl-tRNA(Asx) + AMP + diphosphate. Aspartyl-tRNA synthetase with relaxed tRNA specificity since it is able to aspartylate not only its cognate tRNA(Asp) but also tRNA(Asn). Reaction proceeds in two steps: L-aspartate is first activated by ATP to form Asp-AMP and then transferred to the acceptor end of tRNA(Asp/Asn). This chain is Aspartate--tRNA(Asp/Asn) ligase, found in Prochlorococcus marinus (strain MIT 9211).